A 373-amino-acid chain; its full sequence is Putative F-box/kelch-repeat protein At5g24040 (373 aa).

The region spanning 2–50 (VKWSELPPEILHLISLKIDNPFDLIHFRSVCSFWRSSSLLKFRHMTSLR) is the F-box domain. Kelch repeat units follow at residues 165–207 (NEYM…PFKG) and 262–308 (YDFH…CTFS).

The protein is Putative F-box/kelch-repeat protein At5g24040 of Arabidopsis thaliana (Mouse-ear cress).